The following is a 431-amino-acid chain: MSAPVEVVLSADSAGQLFNCAVYDPHTGSEFLSYRGGNTSSRSLTILNGEYILGAQLGKNYINVWEIQRKDQLQQKIVCPGIVTCLCASPDGLYVLAGIAEAIYLWEVSTGNLLAILSRHFQDLSCIKFTDDSSHFVSGGKDNLAFIWNLSSVVQLDSSRTPEPRHILSRHSLPITDIHCGLMGPQARVATASLDQTVKVWEISSGEMLLSVLFDVGIMSVTFDPCEYFLFCGGSDGNIFQVSLCSTSLSRDKTFQSDSEGNQVFKGHRNLVTCLSVSMDGTVLLSGSNDETVRMWDVQSKQCIWTINHRGPVTNAAIIPAPANMFLSDSHPAVPLPRFSRHLNPSEQGDGTGTGGMSLRLGANTQEPEGTYLEKAEELYSLMCAVTDKSVFGDGENTKVRVSELEEEVRTLKKINKDLYEFSTQLLTKPN.

5 WD repeats span residues 78-118 (VCPG…AILS), 119-158 (RHFQ…QLDS), 170-211 (RHSL…MLLS), 213-252 (LFDV…LSRD), and 267-306 (GHRN…CIWT). The interval 342 to 363 (HLNPSEQGDGTGTGGMSLRLGA) is disordered.

The protein belongs to the WD repeat IPI3/WDR18 family. Component of the PELP1 complex, composed of at least PELP1, TEX10 and WDR18. The complex interacts with pre-60S ribosome particles.

The protein localises to the nucleus. The protein resides in the nucleolus. It is found in the nucleoplasm. It localises to the dynein axonemal particle. In terms of biological role, involved in left-right determination through controlling the correct clustering and migration of dorsal forerunner cells (DFCs) and Kupffer's vesicle formation. Component of the PELP1 complex involved in the nucleolar steps of 28S rRNA maturation and the subsequent nucleoplasmic transit of the pre-60S ribosomal subunit. In Danio rerio (Zebrafish), this protein is WD repeat-containing protein 18 (wdr18).